Consider the following 330-residue polypeptide: Diacylglycerol acyltransferase/mycolyltransferase Ag85B (330 aa).

An N-terminal signal peptide occupies residues 1-40; that stretch reads MTDLSEKVRAWGRRLVVGAAAAATLPGLIGIAGGAATANA. A substrate-binding site is contributed by 82-83; sequence LR. A fibronectin-binding region spans residues 98-108; sequence FEWYYQSGLSV. Cysteines 127 and 132 form a disulfide. Substrate-binding residues include Ser-166 and Asp-194. The active-site Nucleophile is Ser-166. The active site involves Glu-270. Residues 272-275, Lys-279, and 302-304 contribute to the substrate site; these read FVRS and HSW. Residue His-302 is part of the active site.

The protein belongs to the mycobacterial A85 antigen family.

It is found in the secreted. It carries out the reaction 2 alpha,alpha'-trehalose 6-mycolate = alpha,alpha'-trehalose 6,6'-bismycolate + alpha,alpha-trehalose. It catalyses the reaction an acyl-CoA + a 1,2-diacyl-sn-glycerol = a triacyl-sn-glycerol + CoA. In terms of biological role, the antigen 85 proteins (FbpA, FbpB, FbpC) are responsible for the high affinity of mycobacteria for fibronectin, a large adhesive glycoprotein, which facilitates the attachment of M.tuberculosis to murine alveolar macrophages (AMs). They also help to maintain the integrity of the cell wall by catalyzing the transfer of mycolic acids to cell wall arabinogalactan and through the synthesis of alpha,alpha-trehalose dimycolate (TDM, cord factor). They catalyze the transfer of a mycoloyl residue from one molecule of alpha,alpha-trehalose monomycolate (TMM) to another TMM, leading to the formation of TDM. In Mycobacterium intracellulare (strain ATCC 13950 / DSM 43223 / JCM 6384 / NCTC 13025 / 3600), this protein is Diacylglycerol acyltransferase/mycolyltransferase Ag85B (fbpB).